A 401-amino-acid chain; its full sequence is 8-amino-7-oxononanoate synthase (401 aa).

Arginine 24 is a substrate binding site. Residue 111-112 (GF) coordinates pyridoxal 5'-phosphate. A substrate-binding site is contributed by histidine 137. Serine 183, histidine 211, and threonine 240 together coordinate pyridoxal 5'-phosphate. N6-(pyridoxal phosphate)lysine is present on lysine 243. Threonine 357 is a substrate binding site.

The protein belongs to the class-II pyridoxal-phosphate-dependent aminotransferase family. BioF subfamily. Homodimer. Pyridoxal 5'-phosphate is required as a cofactor.

It catalyses the reaction 6-carboxyhexanoyl-[ACP] + L-alanine + H(+) = (8S)-8-amino-7-oxononanoate + holo-[ACP] + CO2. It functions in the pathway cofactor biosynthesis; biotin biosynthesis. Functionally, catalyzes the decarboxylative condensation of pimeloyl-[acyl-carrier protein] and L-alanine to produce 8-amino-7-oxononanoate (AON), [acyl-carrier protein], and carbon dioxide. This Xylella fastidiosa (strain M23) protein is 8-amino-7-oxononanoate synthase.